A 649-amino-acid polypeptide reads, in one-letter code: Leucine-rich repeat transmembrane protein FLRT3 (649 aa).

An N-terminal signal peptide occupies residues Met-1–Ala-28. One can recognise an LRRNT domain in the interval Lys-29–Glu-58. Residues Lys-29 to Pro-528 lie on the Extracellular side of the membrane. Intrachain disulfides connect Cys-31-Cys-37 and Cys-35-Cys-44. Residues Asp-38–Asn-67 form an interaction with ADGRL3 region. LRR repeat units lie at residues Asp-59–Lys-80, Lys-84–Lys-104, Tyr-105–Lys-126, Tyr-129–Phe-150, Tyr-155–Arg-175, Thr-176–Gly-197, Ser-200–Val-220, Asn-226–Thr-247, Asn-248–Tyr-269, and Gln-272–Asp-293. N-linked (GlcNAc...) asparagine glycosylation is present at Asn-226. Residues Asn-282 and Asn-296 are each glycosylated (N-linked (GlcNAc...) asparagine). One can recognise an LRRCT domain in the interval Asn-305 to Asp-357. Cys-309 and Cys-334 are oxidised to a cystine. The disordered stretch occupies residues Lys-387–Ser-407. Residues Pro-389–Gln-401 show a composition bias toward basic and acidic residues. The Fibronectin type-III domain occupies Lys-409–Leu-504. The chain crosses the membrane as a helical span at residues Leu-529–Cys-549. Over Trp-550 to Ser-649 the chain is Cytoplasmic. The interval Leu-622–Ser-649 is disordered.

As to quaternary structure, monomer and homodimer. Self-associates (via leucine-rich repeats), giving rise to homooligomers. Interacts with FGFR1. Interacts (via extracellular domain) with ADGRL1/LPHN1 and LPHN2 (via olfactomedin-like domain). Interacts (via extracellular domain) with ADGRL3 (via olfactomedin-like domain); the interaction is direct. Interacts (via extracellular domain) with UNC5B and UNC5D (via extracellular domain); the interaction is direct. Identified in complexes composed of FLRT3, ADGRL3 and UNC5B, respectively FLRT3, ADGRL3 and UNC5D. May also interact (via extracellular domain) with UNC5A and UNC5C. Interacts (via cytoplasmic domain) with ROBO1. N-glycosylated. Post-translationally, proteolytic cleavage in the juxtamembrane region gives rise to a soluble ectodomain. Cleavage is probably effected by a metalloprotease. As to expression, expressed in kidney, brain, pancreas, skeletal muscle, lung, liver, placenta, and heart.

It is found in the cell membrane. The protein localises to the presynaptic cell membrane. Its subcellular location is the endoplasmic reticulum membrane. It localises to the cell junction. The protein resides in the focal adhesion. It is found in the secreted. The protein localises to the cell projection. Its subcellular location is the axon. It localises to the growth cone membrane. Its function is as follows. Functions in cell-cell adhesion, cell migration and axon guidance, exerting an attractive or repulsive role depending on its interaction partners. Plays a role in the spatial organization of brain neurons. Plays a role in vascular development in the retina. Plays a role in cell-cell adhesion via its interaction with ADGRL3 and probably also other latrophilins that are expressed at the surface of adjacent cells. Interaction with the intracellular domain of ROBO1 mediates axon attraction towards cells expressing NTN1. Mediates axon growth cone collapse and plays a repulsive role in neuron guidance via its interaction with UNC5B, and possibly also other UNC-5 family members. Promotes neurite outgrowth (in vitro). Mediates cell-cell contacts that promote an increase both in neurite number and in neurite length. Plays a role in the regulation of the density of glutamaergic synapses. Plays a role in fibroblast growth factor-mediated signaling cascades. Required for normal morphogenesis during embryonic development, but not for normal embryonic patterning. Required for normal ventral closure, headfold fusion and definitive endoderm migration during embryonic development. Required for the formation of a normal basement membrane and the maintenance of a normal anterior visceral endoderm during embryonic development. This Homo sapiens (Human) protein is Leucine-rich repeat transmembrane protein FLRT3 (FLRT3).